Consider the following 422-residue polypeptide: Phosphoglycerate kinase (422 aa).

Residues 24-26 (DLN), 64-67 (HLGR), Arg-129, and Arg-171 contribute to the substrate site. ATP contacts are provided by residues Lys-222, Gly-309, Glu-340, and 370 to 373 (DIDT).

The protein belongs to the phosphoglycerate kinase family. In terms of assembly, monomer.

It localises to the cytoplasm. The enzyme catalyses (2R)-3-phosphoglycerate + ATP = (2R)-3-phospho-glyceroyl phosphate + ADP. It participates in carbohydrate degradation; glycolysis; pyruvate from D-glyceraldehyde 3-phosphate: step 2/5. In Ureaplasma parvum serovar 3 (strain ATCC 700970), this protein is Phosphoglycerate kinase (pgk).